The following is a 145-amino-acid chain: Lysozyme C (145 aa).

The first 19 residues, 1 to 19 (MLFFGFLLAFLSAVPGTEG), serve as a signal peptide directing secretion. The C-type lysozyme domain maps to 20–145 (EIIPRCELVK…RDLSSYVKGC (126 aa)). 4 disulfide bridges follow: C25-C145, C49-C133, C82-C98, and C94-C112. Residues E54 and D70 contribute to the active site.

The protein belongs to the glycosyl hydrolase 22 family. In terms of assembly, monomer.

It localises to the secreted. The enzyme catalyses Hydrolysis of (1-&gt;4)-beta-linkages between N-acetylmuramic acid and N-acetyl-D-glucosamine residues in a peptidoglycan and between N-acetyl-D-glucosamine residues in chitodextrins.. In terms of biological role, lysozymes have primarily a bacteriolytic function; those in tissues and body fluids are associated with the monocyte-macrophage system and enhance the activity of immunoagents. In Opisthocomus hoazin (Hoatzin), this protein is Lysozyme C (LYZ).